We begin with the raw amino-acid sequence, 75 residues long: Putative UPF0377 protein YJL222W-A (75 aa).

The protein belongs to the UPF0377 family.

This chain is Putative UPF0377 protein YJL222W-A, found in Saccharomyces cerevisiae (strain ATCC 204508 / S288c) (Baker's yeast).